The chain runs to 392 residues: Phosphoglycerate kinase (392 aa).

Substrate contacts are provided by residues 21–23 (DFN), Arg-36, 59–62 (HLGR), Arg-117, and Arg-150. Residues Lys-200, Gly-288, Glu-319, and 345–348 (GGDS) each bind ATP.

Belongs to the phosphoglycerate kinase family. Monomer.

The protein localises to the cytoplasm. It catalyses the reaction (2R)-3-phosphoglycerate + ATP = (2R)-3-phospho-glyceroyl phosphate + ADP. It functions in the pathway carbohydrate degradation; glycolysis; pyruvate from D-glyceraldehyde 3-phosphate: step 2/5. This Rubrobacter xylanophilus (strain DSM 9941 / JCM 11954 / NBRC 16129 / PRD-1) protein is Phosphoglycerate kinase.